The following is an 812-amino-acid chain: MAFSQVQCLDDNHVNWRSSESKPEFFYSEEQRLALEALVARGRDAFYEVLKRENIRDFLSELELSRIVEAIEVYDPGSEDPRVSGRRPEPQDNGGADASEETSAAGGPPATETLPSLEYWPQKSDRSIPQLDLGWPDTIAYRGVTRASVYMQPPIDGQPHIKEVVRKMVSQAQKVIAVVMDMFTDVDIFKDLLDAGFKRKVAVYIIVDESNVKYFLHMCERARMHLGHLKNLRVRSSGGTEFFTRSATKFKGVLAQKFMFVDGDRAVCGSYSFTWSAARTDRNVISVLSGQVVEMFDRQFQELYLMSQSVSLKDIPMEKEPEPEPIVLPSVVPLVPTGTMAKKLVNPKYALVKAKSVDEIAKSSSDKQEVTRPPGLRGPAVAERPGDLSELLPPVHPGLLNLERANMFEYLPTWVEPDPEPGSDILGYINIIDPNIWNPQPNQMNRIKIRDTAHASAQHQLWKQSQGARPCPAPCPPPAPRDSQGVVPAENGFPQGNPEPQAPVPKPRTVPVASVLARDGSDIGWALDTPEKETPQNGIDPRLPSTASESEVPQQQHSSMTQDDPDGLERGLPNGLDEDEDDDDDYVTLSDQDSLSGSSGPGPGHRRPSVASSMSDEYFEVRERSVPLQRRHSEQMANGPGHPPRRQLSAPHVTRGTFGGPLSSPLWAQGRSREDVDASRIQGQRPMDRQAQGQHFHRHGSTTSRTPGPPRFRPAADGTQSSSKKASPAAAGPHHWQPKGSPTPRMLPDPGSPRPTRNTRLRAELRATEEHASPFGIPYSKLSQSKHLKARAGGSQWAPSDSKRRARDHKEP.

Ala-2 is modified (N-acetylalanine). The tract at residues 2–312 (AFSQVQCLDD…LYLMSQSVSL (311 aa)) is DUF1669. Ser-4 is modified (phosphoserine). The interval 76-119 (PGSEDPRVSGRRPEPQDNGGADASEETSAAGGPPATETLPSLEY) is disordered. Basic and acidic residues predominate over residues 79–90 (EDPRVSGRRPEP). Phosphoserine occurs at positions 124, 127, and 356. 3 disordered regions span residues 362–389 (KSSS…GDLS), 455–509 (ASAQ…KPRT), and 521–812 (SDIG…HKEP). Residues 455-467 (ASAQHQLWKQSQG) are compositionally biased toward polar residues. Residues 471–480 (CPAPCPPPAP) show a composition bias toward pro residues. Residues 545–562 (STASESEVPQQQHSSMTQ) are compositionally biased toward polar residues. The span at 576–586 (LDEDEDDDDDY) shows a compositional bias: acidic residues. Residues 589-598 (LSDQDSLSGS) show a composition bias toward low complexity. Residues Ser-609, Ser-613, Ser-615, and Ser-649 each carry the phosphoserine modification. Residues 721–731 (SSSKKASPAAA) are compositionally biased toward low complexity. The segment covering 761–772 (LRAELRATEEHA) has biased composition (basic and acidic residues).

This sequence belongs to the FAM83 family. In terms of assembly, interacts with SMAD1 (via MH2 domain); in a SMAD4-independent manner. Directly interacts (via DUF1669) with casein kinase isoforms CSNK1A1 and CSNK1A1L. BMP signaling induces the phosphorylation by BMPR1A at Ser-609, Ser-613 and Ser-615. Phosphorylation at Ser-609 is necessary for the activation of SMAD4-independent BMP target genes such as NEDD9 and ASNS. Post-translationally, phosphorylated by CSNK1A1.

It is found in the cytoplasm. The protein localises to the cytosol. Its subcellular location is the nucleus. In terms of biological role, substrate for type I BMP receptor kinase involved in regulation of some target genes of the BMP signaling pathway. Also regulates the expression of several non-BMP target genes, suggesting a role in other signaling pathways. This Mus musculus (Mouse) protein is Protein FAM83G (Fam83g).